Consider the following 450-residue polypeptide: Exodeoxyribonuclease 7 large subunit (450 aa).

It belongs to the XseA family. As to quaternary structure, heterooligomer composed of large and small subunits.

The protein resides in the cytoplasm. It carries out the reaction Exonucleolytic cleavage in either 5'- to 3'- or 3'- to 5'-direction to yield nucleoside 5'-phosphates.. Its function is as follows. Bidirectionally degrades single-stranded DNA into large acid-insoluble oligonucleotides, which are then degraded further into small acid-soluble oligonucleotides. This chain is Exodeoxyribonuclease 7 large subunit, found in Listeria monocytogenes serotype 4b (strain CLIP80459).